The sequence spans 152 residues: Transcriptional regulator MraZ (152 aa).

2 SpoVT-AbrB domains span residues 5-52 (ATMV…PLPE) and 81-124 (ASEC…DEQT).

It belongs to the MraZ family. In terms of assembly, forms oligomers.

The protein resides in the cytoplasm. The protein localises to the nucleoid. In terms of biological role, negatively regulates its own expression and that of the subsequent genes in the proximal part of the division and cell wall (dcw) gene cluster. Acts by binding directly to DNA. May also regulate the expression of genes outside the dcw cluster. The chain is Transcriptional regulator MraZ from Yersinia pestis bv. Antiqua (strain Antiqua).